The chain runs to 747 residues: Probable type III restriction-modification enzyme HindVI Mod subunit (747 aa).

The interval 267-270 (DPPY) is binding of S-adenosyl methionine.

Belongs to the N(4)/N(6)-methyltransferase family. As to quaternary structure, homodimer, also forms a functional restriction-competent complex with Res.

The catalysed reaction is a 2'-deoxyadenosine in DNA + S-adenosyl-L-methionine = an N(6)-methyl-2'-deoxyadenosine in DNA + S-adenosyl-L-homocysteine + H(+). Functionally, a beta subtype methylase that binds the system-specific DNA recognition site 5'-CGAAT-3' and methylates A-4 (of only 1 strand). DNA restriction requires both the Res and Mod subunits. This is Probable type III restriction-modification enzyme HindVI Mod subunit from Haemophilus influenzae (strain ATCC 51907 / DSM 11121 / KW20 / Rd).